Consider the following 463-residue polypeptide: uncharacterized protein (463 aa).

It belongs to the mycobacterial PPE family.

This is an uncharacterized protein from Mycobacterium tuberculosis (strain CDC 1551 / Oshkosh).